A 187-amino-acid chain; its full sequence is Elongation factor P (187 aa).

Belongs to the elongation factor P family.

It localises to the cytoplasm. The protein operates within protein biosynthesis; polypeptide chain elongation. In terms of biological role, involved in peptide bond synthesis. Stimulates efficient translation and peptide-bond synthesis on native or reconstituted 70S ribosomes in vitro. Probably functions indirectly by altering the affinity of the ribosome for aminoacyl-tRNA, thus increasing their reactivity as acceptors for peptidyl transferase. The polypeptide is Elongation factor P (Mycobacterium marinum (strain ATCC BAA-535 / M)).